A 306-amino-acid polypeptide reads, in one-letter code: MPFLELTLSCSEVTLPRFQNALDDVGALAVTMLDADADTSNERAILEPGVGEMPLWDRLTMTALFDGDSDALVVLAALEAFDPGLDWSQVAFRMVEDSDWERAWMDLFKPMQFGERTFIVPWNHALPEAADTPEAAVVRLDPGLAFGSGTHQTTALCLRWLDSLAGSGELQGRSVLDFGCGSGILAVAALKLGATHAVGVDNDPQALLATADNAQRNGVDAQLAVYMPQDEPVQTYQVVVANILASALDALADTLAARVAPGGRIALSGILHGQEDDLLKRYAPWFEQLRCERDEDWMRIDGVRRG.

S-adenosyl-L-methionine contacts are provided by Thr154, Gly179, Asp201, and Asn242.

It belongs to the methyltransferase superfamily. PrmA family.

The protein resides in the cytoplasm. The enzyme catalyses L-lysyl-[protein] + 3 S-adenosyl-L-methionine = N(6),N(6),N(6)-trimethyl-L-lysyl-[protein] + 3 S-adenosyl-L-homocysteine + 3 H(+). Its function is as follows. Methylates ribosomal protein L11. The sequence is that of Ribosomal protein L11 methyltransferase from Xanthomonas axonopodis pv. citri (strain 306).